We begin with the raw amino-acid sequence, 196 residues long: Large ribosomal subunit protein uL18 (196 aa).

The protein belongs to the universal ribosomal protein uL18 family. As to quaternary structure, part of the 50S ribosomal subunit. Contacts the 5S and 23S rRNAs.

This is one of the proteins that bind and probably mediate the attachment of the 5S RNA into the large ribosomal subunit, where it forms part of the central protuberance. This chain is Large ribosomal subunit protein uL18, found in Sulfurisphaera tokodaii (strain DSM 16993 / JCM 10545 / NBRC 100140 / 7) (Sulfolobus tokodaii).